A 263-amino-acid chain; its full sequence is tRNA (guanine-N(7)-)-methyltransferase (263 aa).

The segment at 1 to 39 is disordered; it reads MVHHGQMHAQPGVGLRPDTPVASGQLPSTSIRSRRSGIS. E82, D107, N136, and D159 together coordinate S-adenosyl-L-methionine. D159 is a catalytic residue. Substrate contacts are provided by residues K163, D195, and 232–235; that span reads TKYE.

This sequence belongs to the class I-like SAM-binding methyltransferase superfamily. TrmB family.

The catalysed reaction is guanosine(46) in tRNA + S-adenosyl-L-methionine = N(7)-methylguanosine(46) in tRNA + S-adenosyl-L-homocysteine. It participates in tRNA modification; N(7)-methylguanine-tRNA biosynthesis. In terms of biological role, catalyzes the formation of N(7)-methylguanine at position 46 (m7G46) in tRNA. The polypeptide is tRNA (guanine-N(7)-)-methyltransferase (Mycobacterium bovis (strain ATCC BAA-935 / AF2122/97)).